A 232-amino-acid polypeptide reads, in one-letter code: Ion-translocating oxidoreductase complex subunit E (232 aa).

Transmembrane regions (helical) follow at residues 18–38 (GLVQ…LTNA), 39–59 (LGLG…VSLV), 69–89 (IPVF…LINA), 93–113 (GLYL…IIIG), 127–147 (AAFD…VLGA), and 182–202 (PFLL…LIAL).

This sequence belongs to the NqrDE/RnfAE family. In terms of assembly, the complex is composed of six subunits: RnfA, RnfB, RnfC, RnfD, RnfE and RnfG.

Its subcellular location is the cell inner membrane. In terms of biological role, part of a membrane-bound complex that couples electron transfer with translocation of ions across the membrane. This Shewanella sp. (strain ANA-3) protein is Ion-translocating oxidoreductase complex subunit E.